The sequence spans 333 residues: MLRIGPSAGTGTPTGDYGIGATDLCEFMEFPSRVLQVCGDSFAGQAVGFGGWYSPIALHVESDSIDDPAGIRYNGVSGVDKPLLADPTPPGSSQLPAGVVSINRENYMMVTVTKDLTPQTSRLVKADAAKSSWPTVPGSVREASYLGGNQSQVSGYYDPIPTPDSPRGWVYIVANNFDRSGPVFLYRVPPQDFTDRAAWQGWSSVSGRWGDPATALWPDRVGGDGIRLIDGKAVLSYFNATTGNMEMRVADDPTQLGTAPVTTVVYASDWPDPAETLPPPEVNRLAQPYGGYISPASTLDEVRVFISQWNTRPRGGTPYRVIQYAVNPLKPWE.

This is an uncharacterized protein from Mycolicibacterium smegmatis (Mycobacterium smegmatis).